Consider the following 137-residue polypeptide: Mandibular organ-inhibiting hormone (137 aa).

The first 26 residues, 1 to 26 (MTTKCTVMAVVLAACICLQVLPQAYG), serve as a signal peptide directing secretion. Gln63 carries the pyrrolidone carboxylic acid modification. 3 disulfide bridges follow: Cys69-Cys105, Cys85-Cys101, and Cys88-Cys114. Valine amide is present on Val134.

The protein belongs to the arthropod CHH/MIH/GIH/VIH hormone family. As to expression, produced by the medulla terminalis X-organ in the eyestalks and transported to the sinus gland where it is stored and released.

It localises to the secreted. Functionally, represses the synthesis of methyl farnesoate, the precursor of insect juvenile hormone III in the mandibular organ. Also has hyperglycemic activity. This chain is Mandibular organ-inhibiting hormone, found in Libinia emarginata (Portly spider crab).